Consider the following 275-residue polypeptide: MGEHNLLNPGFVGPLVNIHTGDTFYFPNFRPSGGQLPGLPSLSYPRRDNVCSLPWNPSEPCNGYSQSYFSSPVSINPSFNRSCEITRADDGKCYYNNGSGSRENCSGGGSLKREDRARDTSALTSDHGMHAGIGSTVAFSKYDYGTEQLTQDPPSCQSMESDSSSSLLNEASKPSSSDTQTLVSPGSHTGTITASGAAPWYPMHTRTRKKRKPYSKLQLAELEGEFMMNEFITRQRRRELSDRLNLSDQQVKIWFQNRRMKKKRLMLREQALAYF.

Disordered stretches follow at residues 101–129 (SREN…DHGM) and 148–213 (QLTQ…KRKP). The segment covering 155–177 (SCQSMESDSSSSLLNEASKPSSS) has biased composition (low complexity). A compositionally biased stretch (polar residues) spans 178-194 (DTQTLVSPGSHTGTITA). A DNA-binding region (homeobox) is located at residues 207–266 (TRKKRKPYSKLQLAELEGEFMMNEFITRQRRRELSDRLNLSDQQVKIWFQNRRMKKKRLM).

The protein belongs to the Abd-B homeobox family.

It is found in the nucleus. Sequence-specific transcription factor which is part of a developmental regulatory system that provides cells with specific positional identities on the anterior-posterior axis. The sequence is that of Homeobox protein Hox-C12a (hoxc12a) from Takifugu rubripes (Japanese pufferfish).